The chain runs to 372 residues: Peroxisomal biogenesis factor 3 (372 aa).

At 1-15 (MLRSMWNFLKRHKKK) the chain is on the cytoplasmic side. The segment at 1-45 (MLRSMWNFLKRHKKKCIFLGTVLGGVYILGKYGQKKIREIQEREA) is targeting to peroxisomes. A helical transmembrane segment spans residues 16–36 (CIFLGTVLGGVYILGKYGQKK). The Peroxisomal segment spans residues 37-116 (IREIQEREAA…LKIISFTRSI (80 aa)). A helical transmembrane segment spans residues 117 to 140 (VAVYSTCMLVVLLRVQLNIIGGYI). Positions 120–136 (YSTCMLVVLLRVQLNII) are interaction with PEX19. Over 141–372 (YLDNATVGKN…AFSTPQQLEK (232 aa)) the chain is Cytoplasmic.

This sequence belongs to the peroxin-3 family. As to quaternary structure, interacts with PEX19. Identified in all tissues analyzed, with the strongest expression in liver and in testis.

The protein localises to the peroxisome membrane. Functionally, involved in peroxisome biosynthesis and integrity. Assembles membrane vesicles before the matrix proteins are translocated. As a docking factor for PEX19, is necessary for the import of peroxisomal membrane proteins in the peroxisomes. This chain is Peroxisomal biogenesis factor 3 (Pex3), found in Mus musculus (Mouse).